We begin with the raw amino-acid sequence, 313 residues long: Ribosomal RNA small subunit methyltransferase H (313 aa).

S-adenosyl-L-methionine contacts are provided by residues 35–37, aspartate 55, phenylalanine 79, aspartate 101, and glutamine 108; that span reads GGH.

This sequence belongs to the methyltransferase superfamily. RsmH family.

Its subcellular location is the cytoplasm. It catalyses the reaction cytidine(1402) in 16S rRNA + S-adenosyl-L-methionine = N(4)-methylcytidine(1402) in 16S rRNA + S-adenosyl-L-homocysteine + H(+). Functionally, specifically methylates the N4 position of cytidine in position 1402 (C1402) of 16S rRNA. This chain is Ribosomal RNA small subunit methyltransferase H, found in Klebsiella pneumoniae (strain 342).